The sequence spans 197 residues: Imidazoleglycerol-phosphate dehydratase (197 aa).

The protein belongs to the imidazoleglycerol-phosphate dehydratase family.

It localises to the cytoplasm. The enzyme catalyses D-erythro-1-(imidazol-4-yl)glycerol 3-phosphate = 3-(imidazol-4-yl)-2-oxopropyl phosphate + H2O. It functions in the pathway amino-acid biosynthesis; L-histidine biosynthesis; L-histidine from 5-phospho-alpha-D-ribose 1-diphosphate: step 6/9. The chain is Imidazoleglycerol-phosphate dehydratase from Marinomonas sp. (strain MWYL1).